A 494-amino-acid chain; its full sequence is Casein kinase I homolog HRR25 (494 aa).

The region spanning 9-278 (FRIGRKIGSG…LARLFKDLSI (270 aa)) is the Protein kinase domain. Residues 15-23 (IGSGSFGDI) and lysine 38 each bind ATP. Aspartate 128 acts as the Proton acceptor in catalysis. At serine 143 the chain carries Phosphoserine. Residues 394–494 (RQQQPQQQVQ…DKPAGQSIWL (101 aa)) are disordered. Low complexity-rich tracts occupy residues 395–418 (QQQPQQQVQSSQPQPQPQQLQQQP) and 432–444 (QQQQRDSQEQQQQ). Over residues 445–479 (VPMATTRATQYPPQINSNNFNTNQASVPPQMRSNP) the composition is skewed to polar residues.

Belongs to the protein kinase superfamily. CK1 Ser/Thr protein kinase family. Casein kinase I subfamily. Interacts with HRI1. Interacts with ELP1/IKI3; the interaction leads to ELP1/IKI3 phosphorylation.

Its subcellular location is the cytoplasm. It is found in the nucleus. The protein resides in the nucleolus. It localises to the nucleoplasm. The enzyme catalyses L-seryl-[protein] + ATP = O-phospho-L-seryl-[protein] + ADP + H(+). It carries out the reaction L-threonyl-[protein] + ATP = O-phospho-L-threonyl-[protein] + ADP + H(+). Its function is as follows. Protein kinase which phosphorylates serine and threonine residues. Can use casein as a substrate. Phosphorylates elongator complex member ELP1/IKI3 on 'Ser-1198' and 'Ser-1202' which promotes the tRNA modification function of the complex. Associated with repair of damaged DNA and meiosis. The chain is Casein kinase I homolog HRR25 (HRR25) from Saccharomyces cerevisiae (strain ATCC 204508 / S288c) (Baker's yeast).